The chain runs to 207 residues: Protein N-terminal glutamine amidohydrolase (207 aa).

Residues Cys-30, His-83, and Asp-99 contribute to the active site.

Belongs to the NTAQ1 family. As to quaternary structure, monomer.

The protein localises to the cytoplasm. Its subcellular location is the cytosol. It localises to the nucleus. The catalysed reaction is N-terminal L-glutaminyl-[protein] + H2O = N-terminal L-glutamyl-[protein] + NH4(+). Mediates the side-chain deamidation of N-terminal glutamine residues to glutamate, an important step in N-end rule pathway of protein degradation. Conversion of the resulting N-terminal glutamine to glutamate renders the protein susceptible to arginylation, polyubiquitination and degradation as specified by the N-end rule. Does not act on substrates with internal or C-terminal glutamine and does not act on non-glutamine residues in any position. Does not deaminate acetylated N-terminal glutamine. With the exception of proline, all tested second-position residues on substrate peptides do not greatly influence the activity. In contrast, a proline at position 2, virtually abolishes deamidation of N-terminal glutamine. This Bos taurus (Bovine) protein is Protein N-terminal glutamine amidohydrolase (NTAQ1).